Here is a 779-residue protein sequence, read N- to C-terminus: Endoribonuclease YSH1 (779 aa).

His-68, His-70, Asp-72, His-73, His-163, and Asp-184 together coordinate Zn(2+). Residue His-408 is the Proton donor of the active site. His-430 contacts Zn(2+). Ser-517 is subject to Phosphoserine; by ATM or ATR.

Belongs to the metallo-beta-lactamase superfamily. RNA-metabolizing metallo-beta-lactamase-like family. CPSF2/YSH1 subfamily. As to quaternary structure, component of the cleavage and polyadenylation factor (CPF) complex, which is composed of at least PTI1, SYC1, SSU72, GLC7, MPE1, REF2, PFS2, PTA1, YSH1/BRR5, SWD2, CFT2/YDH1, YTH1, CFT1/YHH1, FIP1 and PAP1. Interacts with FIP1, PFS2, RNA14 and YTH1. Requires Zn(2+) as cofactor.

Its subcellular location is the nucleus. Component of the cleavage and polyadenylation factor (CPF) complex, which plays a key role in polyadenylation-dependent pre-mRNA 3'-end formation and cooperates with cleavage factors including the CFIA complex and NAB4/CFIB. Has endonuclease activity. In Saccharomyces cerevisiae (strain ATCC 204508 / S288c) (Baker's yeast), this protein is Endoribonuclease YSH1 (YSH1).